Consider the following 279-residue polypeptide: Large ribosomal subunit protein uL2 (279 aa).

Disordered stretches follow at residues M1–K59 and V224–R279. Basic residues-rich tracts occupy residues T50–K59 and V269–R279.

Belongs to the universal ribosomal protein uL2 family. As to quaternary structure, part of the 50S ribosomal subunit. Forms a bridge to the 30S subunit in the 70S ribosome.

One of the primary rRNA binding proteins. Required for association of the 30S and 50S subunits to form the 70S ribosome, for tRNA binding and peptide bond formation. It has been suggested to have peptidyltransferase activity; this is somewhat controversial. Makes several contacts with the 16S rRNA in the 70S ribosome. This is Large ribosomal subunit protein uL2 from Arthrobacter sp. (strain FB24).